We begin with the raw amino-acid sequence, 286 residues long: 2-hydroxy-6-oxononadienedioate/2-hydroxy-6-oxononatrienedioate hydrolase 2 (286 aa).

Histidine 266 (proton acceptor) is an active-site residue.

Belongs to the AB hydrolase superfamily. MhpC family. As to quaternary structure, homodimer.

It carries out the reaction (2Z,4E)-2-hydroxy-6-oxonona-2,4-dienedioate + H2O = (2Z)-2-hydroxypenta-2,4-dienoate + succinate + H(+). The enzyme catalyses (2Z,4E,7E)-2-hydroxy-6-oxonona-2,4,7-trienedioate + H2O = (2Z)-2-hydroxypenta-2,4-dienoate + fumarate + H(+). It functions in the pathway aromatic compound metabolism; 3-phenylpropanoate degradation. Functionally, catalyzes the cleavage of the C5-C6 bond of 2-hydroxy-6-oxononadienedioate and 2-hydroxy-6-oxononatrienedioate, a dienol ring fission product of the bacterial meta-cleavage pathway for degradation of phenylpropionic acid. This Pseudomonas putida (Arthrobacter siderocapsulatus) protein is 2-hydroxy-6-oxononadienedioate/2-hydroxy-6-oxononatrienedioate hydrolase 2.